We begin with the raw amino-acid sequence, 145 residues long: Actin-related protein 4A (145 aa).

A disordered region spans residues 47–66 (IDDAANTTEDAKESDKEKGK). The span at 55–64 (EDAKESDKEK) shows a compositional bias: basic and acidic residues.

This sequence belongs to the actin family. ARP4 subfamily. As to expression, expressed in roots, leaves and flowers.

In Arabidopsis thaliana (Mouse-ear cress), this protein is Actin-related protein 4A (ARP4A).